Reading from the N-terminus, the 214-residue chain is UPF0502 protein Acid345_3645 (214 aa).

The protein belongs to the UPF0502 family.

The sequence is that of UPF0502 protein Acid345_3645 from Koribacter versatilis (strain Ellin345).